The sequence spans 239 residues: Ribosomal RNA small subunit methyltransferase G (239 aa).

Residues G76, F81, 99–101 (DSS), 128–129 (IE), and R147 each bind S-adenosyl-L-methionine.

It belongs to the methyltransferase superfamily. RNA methyltransferase RsmG family.

It localises to the cytoplasm. Its function is as follows. Specifically methylates the N7 position of a guanine in 16S rRNA. This chain is Ribosomal RNA small subunit methyltransferase G, found in Prochlorococcus marinus (strain MIT 9515).